A 273-amino-acid chain; its full sequence is Dermonecrotic toxin LhSicTox-alphaIA2ai (273 aa).

His5 is an active-site residue. Mg(2+) contacts are provided by Glu25 and Asp27. The active-site Nucleophile is the His41. Intrachain disulfides connect Cys45–Cys51 and Cys47–Cys190. Position 85 (Asp85) interacts with Mg(2+).

It belongs to the arthropod phospholipase D family. Class II subfamily. The cofactor is Mg(2+). As to expression, expressed by the venom gland.

Its subcellular location is the secreted. The enzyme catalyses an N-(acyl)-sphingosylphosphocholine = an N-(acyl)-sphingosyl-1,3-cyclic phosphate + choline. The catalysed reaction is an N-(acyl)-sphingosylphosphoethanolamine = an N-(acyl)-sphingosyl-1,3-cyclic phosphate + ethanolamine. It catalyses the reaction a 1-acyl-sn-glycero-3-phosphocholine = a 1-acyl-sn-glycero-2,3-cyclic phosphate + choline. It carries out the reaction a 1-acyl-sn-glycero-3-phosphoethanolamine = a 1-acyl-sn-glycero-2,3-cyclic phosphate + ethanolamine. In terms of biological role, dermonecrotic toxins cleave the phosphodiester linkage between the phosphate and headgroup of certain phospholipids (sphingolipid and lysolipid substrates), forming an alcohol (often choline) and a cyclic phosphate. This toxin acts on sphingomyelin (SM). It may also act on ceramide phosphoethanolamine (CPE), lysophosphatidylcholine (LPC) and lysophosphatidylethanolamine (LPE), but not on lysophosphatidylserine (LPS), and lysophosphatidylglycerol (LPG). It acts by transphosphatidylation, releasing exclusively cyclic phosphate products as second products. Induces dermonecrosis, hemolysis, increased vascular permeability, edema, inflammatory response, and platelet aggregation. The protein is Dermonecrotic toxin LhSicTox-alphaIA2ai of Loxosceles hirsuta (Recluse spider).